Here is a 437-residue protein sequence, read N- to C-terminus: UDP-N-acetylmuramate--L-alanine ligase (437 aa).

108–114 (GAHGKTS) contributes to the ATP binding site.

This sequence belongs to the MurCDEF family.

It localises to the cytoplasm. It carries out the reaction UDP-N-acetyl-alpha-D-muramate + L-alanine + ATP = UDP-N-acetyl-alpha-D-muramoyl-L-alanine + ADP + phosphate + H(+). It participates in cell wall biogenesis; peptidoglycan biosynthesis. Its function is as follows. Cell wall formation. The chain is UDP-N-acetylmuramate--L-alanine ligase from Lysinibacillus sphaericus (strain C3-41).